A 583-amino-acid polypeptide reads, in one-letter code: Aspartate--tRNA ligase (583 aa).

Residue Glu-174 participates in L-aspartate binding. The segment at 198–201 is aspartate; the sequence is QITK. Residue Arg-220 participates in L-aspartate binding. ATP contacts are provided by residues 220-222 and Gln-229; that span reads RDE. His-443 is a binding site for L-aspartate. Residue Glu-477 coordinates ATP. Arg-484 provides a ligand contact to L-aspartate. 529 to 532 contacts ATP; it reads GLDR.

It belongs to the class-II aminoacyl-tRNA synthetase family. Type 1 subfamily. As to quaternary structure, homodimer.

It is found in the cytoplasm. The enzyme catalyses tRNA(Asp) + L-aspartate + ATP = L-aspartyl-tRNA(Asp) + AMP + diphosphate. In terms of biological role, catalyzes the attachment of L-aspartate to tRNA(Asp) in a two-step reaction: L-aspartate is first activated by ATP to form Asp-AMP and then transferred to the acceptor end of tRNA(Asp). The chain is Aspartate--tRNA ligase from Streptococcus thermophilus (strain CNRZ 1066).